The primary structure comprises 514 residues: ATP synthase subunit alpha (514 aa).

ATP is bound at residue 169 to 176 (GDRQTGKT).

This sequence belongs to the ATPase alpha/beta chains family. F-type ATPases have 2 components, CF(1) - the catalytic core - and CF(0) - the membrane proton channel. CF(1) has five subunits: alpha(3), beta(3), gamma(1), delta(1), epsilon(1). CF(0) has three main subunits: a(1), b(2) and c(9-12). The alpha and beta chains form an alternating ring which encloses part of the gamma chain. CF(1) is attached to CF(0) by a central stalk formed by the gamma and epsilon chains, while a peripheral stalk is formed by the delta and b chains.

Its subcellular location is the cell membrane. It catalyses the reaction ATP + H2O + 4 H(+)(in) = ADP + phosphate + 5 H(+)(out). Produces ATP from ADP in the presence of a proton gradient across the membrane. The alpha chain is a regulatory subunit. The sequence is that of ATP synthase subunit alpha from Buchnera aphidicola subsp. Baizongia pistaciae (strain Bp).